The sequence spans 165 residues: ER membrane protein complex subunit 5 (165 aa).

At M1–P3 the chain is on the cytoplasmic side. The chain crosses the membrane as a helical span at residues S4–F22. Over S23 to I77 the chain is Lumenal. The chain crosses the membrane as a helical span at residues D78 to I97. Residues A98–R165 lie on the Cytoplasmic side of the membrane. S154 bears the Phosphoserine mark.

Belongs to the membrane magnesium transporter (TC 1.A.67) family. In terms of assembly, component of the ER membrane protein complex (EMC).

It localises to the endoplasmic reticulum membrane. Its subcellular location is the golgi apparatus membrane. The protein localises to the early endosome membrane. Its function is as follows. Part of the endoplasmic reticulum membrane protein complex (EMC) that enables the energy-independent insertion into endoplasmic reticulum membranes of newly synthesized membrane proteins. Preferentially accommodates proteins with transmembrane domains that are weakly hydrophobic or contain destabilizing features such as charged and aromatic residues. Involved in the cotranslational insertion of multi-pass membrane proteins in which stop-transfer membrane-anchor sequences become ER membrane spanning helices. It is also required for the post-translational insertion of tail-anchored/TA proteins in endoplasmic reticulum membranes. By mediating the proper cotranslational insertion of N-terminal transmembrane domains in an N-exo topology, with translocated N-terminus in the lumen of the ER, controls the topology of multi-pass membrane proteins like the G protein-coupled receptors. By regulating the insertion of various proteins in membranes, it is indirectly involved in many cellular processes. May be involved in Mg(2+) transport. The protein is ER membrane protein complex subunit 5 of Bos taurus (Bovine).